A 433-amino-acid chain; its full sequence is FAD-dependent monooxygenase notI (433 aa).

The FAD site is built by E45 and R117. Residue R195 is part of the active site. FAD is bound by residues D314 and A327.

It belongs to the paxM FAD-dependent monooxygenase family. FAD is required as a cofactor.

Its pathway is alkaloid biosynthesis. FAD-dependent monooxygenase; part of the gene cluster that mediates the biosynthesis of notoamide, a fungal indole alkaloid that belongs to a family of natural products containing a characteristic bicyclo[2.2.2]diazaoctane core. The first step of notoamide biosynthesis involves coupling of L-proline and L-tryptophan by the bimodular NRPS notE, to produce cyclo-L-tryptophan-L-proline called brevianamide F. The reverse prenyltransferase notF then acts as a deoxybrevianamide E synthase and converts brevianamide F to deoxybrevianamide E via reverse prenylation at C-2 of the indole ring leading to the bicyclo[2.2.2]diazaoctane core. Deoxybrevianamide E is further hydroxylated at C-6 of the indole ring, likely catalyzed by the cytochrome P450 monooxygenase notG, to yield 6-hydroxy-deoxybrevianamide E. 6-hydroxy-deoxybrevianamide E is a specific substrate of the prenyltransferase notC for normal prenylation at C-7 to produce 6-hydroxy-7-prenyl-deoxybrevianamide, also called notoamide S. As the proposed pivotal branching point in notoamide biosynthesis, notoamide S can be diverted to notoamide E through an oxidative pyran ring closure putatively catalyzed by either notH cytochrome P450 monooxygenase or the notD FAD-linked oxidoreductase. This step would be followed by an indole 2,3-epoxidation-initiated pinacol-like rearrangement catalyzed by the notB FAD-dependent monooxygenase leading to the formation of notoamide C and notoamide D. On the other hand notoamide S is converted to notoamide T by notH (or notD), a bifunctional oxidase that also functions as the intramolecular Diels-Alderase responsible for generation of (+)-notoamide T. To generate antipodal (-)-notoaminide T, notH' (or notD') in Aspergillus versicolor is expected to catalyze a Diels-Alder reaction leading to the opposite stereochemistry. The remaining oxidoreductase notD (or notH) likely catalyzes the oxidative pyran ring formation to yield (+)-stephacidin A. The FAD-dependent monooxygenase notI is highly similar to notB and is predicted to catalyze a similar conversion from (+)-stephacidin A to (-)-notoamide B via the 2,3-epoxidation of (+)-stephacidin A followed by a pinacol-type rearrangement. Finally, it remains unclear which enzyme could be responsible for the final hydroxylation steps leading to notoamide A and sclerotiamide. This chain is FAD-dependent monooxygenase notI, found in Aspergillus sp. (strain MF297-2).